The sequence spans 270 residues: Orotidine 5'-phosphate decarboxylase (270 aa).

Lysine 95 serves as the catalytic Proton donor.

Belongs to the OMP decarboxylase family. Type 2 subfamily.

The catalysed reaction is orotidine 5'-phosphate + H(+) = UMP + CO2. Its pathway is pyrimidine metabolism; UMP biosynthesis via de novo pathway; UMP from orotate: step 2/2. In Dechloromonas aromatica (strain RCB), this protein is Orotidine 5'-phosphate decarboxylase.